A 925-amino-acid chain; its full sequence is Centrosomal protein of 104 kDa (925 aa).

Positions 209 to 289 form a coiled coil; sequence EVAQIIRKLD…RAEVYEQLEL (81 aa). 2 HEAT repeats span residues 529–567 and 604–640; these read TIPV…LQII and GFTI…YRQH. The stretch at 677–725 forms a coiled coil; the sequence is DAEMRARRKAATEEAEKQKKEEIKALQGQLAALKEIQAEVQEKESDAVK. The segment at 883-925 is disordered; that stretch reads PALQPGKSSAVAASGPLGSKAGSKIPTPKGGLSKSSSRTYAKR. The span at 915–925 shows a compositional bias: polar residues; sequence SKSSSRTYAKR.

As to quaternary structure, interacts with CCP110 and CEP97. Interacts with ARMC9, TOGARAM1, CCDC66 and CSPP1.

The protein resides in the cell projection. The protein localises to the cilium. It is found in the cytoplasm. It localises to the cytoskeleton. Its subcellular location is the microtubule organizing center. The protein resides in the centrosome. The protein localises to the centriole. It is found in the spindle pole. Functionally, required for ciliogenesis and for structural integrity at the ciliary tip. The chain is Centrosomal protein of 104 kDa (CEP104) from Homo sapiens (Human).